Reading from the N-terminus, the 212-residue chain is Imidazole glycerol phosphate synthase subunit HisH (212 aa).

The Glutamine amidotransferase type-1 domain maps to 3–211 (LIAVIDYDMG…VQQVQKLALV (209 aa)). The active-site Nucleophile is the cysteine 81. Active-site residues include histidine 186 and glutamate 188.

As to quaternary structure, heterodimer of HisH and HisF.

The protein localises to the cytoplasm. It carries out the reaction 5-[(5-phospho-1-deoxy-D-ribulos-1-ylimino)methylamino]-1-(5-phospho-beta-D-ribosyl)imidazole-4-carboxamide + L-glutamine = D-erythro-1-(imidazol-4-yl)glycerol 3-phosphate + 5-amino-1-(5-phospho-beta-D-ribosyl)imidazole-4-carboxamide + L-glutamate + H(+). The enzyme catalyses L-glutamine + H2O = L-glutamate + NH4(+). The protein operates within amino-acid biosynthesis; L-histidine biosynthesis; L-histidine from 5-phospho-alpha-D-ribose 1-diphosphate: step 5/9. IGPS catalyzes the conversion of PRFAR and glutamine to IGP, AICAR and glutamate. The HisH subunit catalyzes the hydrolysis of glutamine to glutamate and ammonia as part of the synthesis of IGP and AICAR. The resulting ammonia molecule is channeled to the active site of HisF. The sequence is that of Imidazole glycerol phosphate synthase subunit HisH from Microcystis aeruginosa (strain NIES-843 / IAM M-2473).